A 192-amino-acid chain; its full sequence is T-cell surface glycoprotein CD3 epsilon chain (192 aa).

The first 21 residues, 1–21, serve as a signal peptide directing secretion; sequence MQTGNLWQVLGLCLLLVGAWA. Topologically, residues 22–111 are extracellular; it reads QDDTEQNPYE…RVCKNCMEVN (90 aa). The region spanning 27 to 98 is the Ig-like domain; the sequence is QNPYEVSISG…GNTEAAHTLY (72 aa). C43 and C84 are joined by a disulfide. Residues 112–137 traverse the membrane as a helical segment; that stretch reads LLEVATIIVVDICVTLGLLLLVYYWS. Residues 138–192 lie on the Cytoplasmic side of the membrane; the sequence is KSRKAKATPMTRGAGAGGRPRGQNRERPPPVPNPDYEPIRKGQRDLYSGLNQRGV. Residues 146–192 form a disordered region; it reads PMTRGAGAGGRPRGQNRERPPPVPNPDYEPIRKGQRDLYSGLNQRGV. Residues 160-177 form an NUMB-binding region region; sequence QNRERPPPVPNPDYEPIR. The region spanning 163–190 is the ITAM domain; that stretch reads ERPPPVPNPDYEPIRKGQRDLYSGLNQR. The tract at residues 164–171 is proline-rich sequence; it reads RPPPVPNP. 2 positions are modified to phosphotyrosine: Y173 and Y184.

As to quaternary structure, the TCR-CD3 complex is composed of a CD3D/CD3E and a CD3G/CD3E heterodimers that preferentially associate with TCRalpha and TCRbeta, respectively, to form TCRalpha/CD3E/CD3G and TCRbeta/CD3G/CD3E trimers. In turn, the hexamer interacts with CD3Z homodimer to form the TCR-CD3 complex. Alternatively, TCRalpha and TCRbeta can be replaced by TCRgamma and TCRdelta. Interacts with CD6. Interacts (via Proline-rich sequence) with NCK1; the interaction is ligand dependent but independent of tyrosine kinase activation. Post-translationally, phosphorylated on Tyr residues after T-cell receptor triggering by LCK in association with CD4/CD8.

The protein localises to the cell membrane. Its function is as follows. Part of the TCR-CD3 complex present on T-lymphocyte cell surface that plays an essential role in adaptive immune response. When antigen presenting cells (APCs) activate T-cell receptor (TCR), TCR-mediated signals are transmitted across the cell membrane by the CD3 chains CD3D, CD3E, CD3G and CD3Z. All CD3 chains contain immunoreceptor tyrosine-based activation motifs (ITAMs) in their cytoplasmic domain. Upon TCR engagement, these motifs become phosphorylated by Src family protein tyrosine kinases LCK and FYN, resulting in the activation of downstream signaling pathways. In addition of this role of signal transduction in T-cell activation, CD3E plays an essential role in correct T-cell development. Also participates in internalization and cell surface down-regulation of TCR-CD3 complexes via endocytosis sequences present in CD3E cytosolic region. In addition to its role as a TCR coreceptor, it serves as a receptor for ITPRIPL1. Ligand recognition inhibits T-cell activation by promoting interaction with NCK1, which prevents CD3E-ZAP70 interaction and blocks the ERK-NFkB signaling cascade and calcium influx. The protein is T-cell surface glycoprotein CD3 epsilon chain (CD3E) of Ovis aries (Sheep).